The chain runs to 111 residues: Cornifelin homolog A (111 aa).

This sequence belongs to the cornifelin family.

The chain is Cornifelin homolog A (cnfn-a) from Xenopus laevis (African clawed frog).